A 517-amino-acid polypeptide reads, in one-letter code: Crotonobetaine/carnitine--CoA ligase (517 aa).

It belongs to the ATP-dependent AMP-binding enzyme family.

The enzyme catalyses 4-(trimethylamino)butanoate + ATP + CoA = 4-(trimethylamino)butanoyl-CoA + AMP + diphosphate. It carries out the reaction crotonobetaine + ATP + CoA = crotonobetainyl-CoA + AMP + diphosphate. The catalysed reaction is (R)-carnitine + ATP + CoA = (R)-carnitinyl-CoA + AMP + diphosphate. It functions in the pathway amine and polyamine metabolism; carnitine metabolism. In terms of biological role, catalyzes the transfer of CoA to carnitine, generating the initial carnitinyl-CoA needed for the CaiB reaction cycle. Also has activity toward crotonobetaine and gamma-butyrobetaine. This is Crotonobetaine/carnitine--CoA ligase from Escherichia coli (strain K12 / MC4100 / BW2952).